Here is a 184-residue protein sequence, read N- to C-terminus: UPF0397 protein SAR2767 (184 aa).

5 helical membrane-spanning segments follow: residues 11 to 31, 44 to 64, 77 to 97, 117 to 137, and 148 to 168; these read VVAI…VVIP, AFLA…TGLI, AWWS…WIGL, GQII…DILI, and QGVI…TILL.

The protein belongs to the UPF0397 family.

The protein localises to the cell membrane. The polypeptide is UPF0397 protein SAR2767 (Staphylococcus aureus (strain MRSA252)).